A 234-amino-acid chain; its full sequence is Large ribosomal subunit protein uL1 (234 aa).

Belongs to the universal ribosomal protein uL1 family. As to quaternary structure, part of the 50S ribosomal subunit.

In terms of biological role, binds directly to 23S rRNA. The L1 stalk is quite mobile in the ribosome, and is involved in E site tRNA release. Its function is as follows. Protein L1 is also a translational repressor protein, it controls the translation of the L11 operon by binding to its mRNA. The polypeptide is Large ribosomal subunit protein uL1 (Prochlorococcus marinus (strain MIT 9211)).